Reading from the N-terminus, the 298-residue chain is MRKTVRKNKQVKRELALLEKEKEEIESFTKVSKTVENKQSINSNWNVTKEKIKNKNNAYQKKKEAKLKLKSATPYTSTKVIEEKKPHIKDFNQLCQEHNIISPIDDNLVSPTQKEIDNLNESSKFFSIDCKIIEIEGNKGTLGKVCIANQNGQIIYEKIVKPMDKIVDFRTKFTGLTRDKVQREGTDFLQVQKEVEKILRHKILVGHDLVHDLKNLKLAHKKKLLRDATQFTKFFNPDTNSEDSLKSIAKRELNFSPDNWDPNGKRDTIINVILYKQNQKEWEAFINNKFYGQPIDKN.

Residues 1–73 are a coiled coil; that stretch reads MRKTVRKNKQ…EAKLKLKSAT (73 aa). Residues 125–275 form the Exonuclease domain; it reads FFSIDCKIIE…RDTIINVILY (151 aa).

This sequence belongs to the REXO4 family.

The protein localises to the nucleus. This Dictyostelium discoideum (Social amoeba) protein is RNA exonuclease 4 (rexo4).